An 83-amino-acid polypeptide reads, in one-letter code: uncharacterized protein (83 aa).

This is an uncharacterized protein from Treponema pallidum (strain Nichols).